A 145-amino-acid chain; its full sequence is Cystatin-F (145 aa).

Residues methionine 1 to glycine 19 form the signal peptide. Asparagine 62 carries an N-linked (GlcNAc...) asparagine glycan. Positions glutamine 81–glycine 85 match the Secondary area of contact motif. A disulfide bridge connects residues cysteine 99 and cysteine 110. Residue asparagine 115 is glycosylated (N-linked (GlcNAc...) asparagine). Cysteine 124 and cysteine 144 form a disulfide bridge.

Belongs to the cystatin family. In terms of assembly, homodimer; disulfide-linked. Primarily expressed in peripheral blood cells and spleen.

The protein localises to the secreted. Its subcellular location is the cytoplasm. In terms of biological role, inhibits papain and cathepsin L but with affinities lower than other cystatins. May play a role in immune regulation through inhibition of a unique target in the hematopoietic system. The protein is Cystatin-F (CST7) of Homo sapiens (Human).